Reading from the N-terminus, the 485-residue chain is uncharacterized protein (485 aa).

The next 13 helical transmembrane spans lie at 13–33, 38–58, 79–99, 111–131, 160–180, 211–231, 234–254, 297–317, 321–341, 365–385, 388–408, 420–440, and 445–465; these read WSAL…VILS, PFEF…DMLA, ALYW…IILS, LSFL…GQQY, VIIG…LLTV, LLFS…SSIT, IVAR…FNVA, INFP…YLVF, WLFI…RMVA, IIIF…VGAA, FLIC…KPVL, FIPF…DIYI, and LTFF…TIFI.

It belongs to the polysaccharide synthase family.

Its subcellular location is the cell membrane. This is an uncharacterized protein from Klebsiella pneumoniae.